A 215-amino-acid chain; its full sequence is Cytochrome b6 (215 aa).

Residues 32-52 (IFYCLGGITLTCFLIQFATGF) form a helical membrane-spanning segment. A heme c-binding site is contributed by Cys-35. Positions 86 and 100 each coordinate heme b. 3 consecutive transmembrane segments (helical) span residues 90-110 (ASMMVLMMILHVFRVYLTGGF), 116-136 (LTWVTGVVLAVITVSFGVTGY), and 186-206 (LHTFVLPWSIAVFMLMHFLMI). The heme b site is built by His-187 and His-202.

Belongs to the cytochrome b family. PetB subfamily. In terms of assembly, the 4 large subunits of the cytochrome b6-f complex are cytochrome b6, subunit IV (17 kDa polypeptide, PetD), cytochrome f and the Rieske protein, while the 4 small subunits are PetG, PetL, PetM and PetN. The complex functions as a dimer. It depends on heme b as a cofactor. Heme c is required as a cofactor.

It localises to the cellular thylakoid membrane. Functionally, component of the cytochrome b6-f complex, which mediates electron transfer between photosystem II (PSII) and photosystem I (PSI), cyclic electron flow around PSI, and state transitions. In Synechococcus elongatus, this protein is Cytochrome b6.